A 1236-amino-acid polypeptide reads, in one-letter code: ABC transporter B family member 9 (1236 aa).

The ABC transmembrane type-1 1 domain occupies 33–320 (MTVGTIAAAG…TSPSLNAFAA (288 aa)). Helical transmembrane passes span 38-58 (IAAA…GQLI), 80-100 (FIYL…CWMV), 158-178 (QLLC…PLLA), 179-199 (GVLC…SLIM), 257-277 (ISGF…GLAV), and 288-308 (GYNG…GMSL). Residues 355–591 (IELKDVYFRY…PEGAYSQLVR (237 aa)) enclose the ABC transporter 1 domain. 390–397 (GQSGSGKS) provides a ligand contact to ATP. A glycan (N-linked (GlcNAc...) asparagine) is linked at N542. Residues 593-616 (QEGSKEEATESERPETSLDVERSG) form a disordered region. Residues 594–616 (EGSKEEATESERPETSLDVERSG) show a composition bias toward basic and acidic residues. 2 N-linked (GlcNAc...) asparagine glycosylation sites follow: N631 and N653. A run of 6 helical transmembrane segments spans residues 685-705 (VLVL…IFGL), 725-745 (SHFW…MIPV), 785-805 (SLVG…TTGL), 806-826 (IIAF…SPFI), 902-922 (FSFF…AGLI), and 927-947 (ATFG…IGVS). Residues 686–958 (LVLGSIAAMV…TSAMAPDSNK (273 aa)) enclose the ABC transmembrane type-1 2 domain. The ABC transporter 2 domain maps to 993 to 1230 (IEFRHVSFRY…SGGAYASLVT (238 aa)). 1028–1035 (GESGSGKS) is a binding site for ATP. N1082 and N1181 each carry an N-linked (GlcNAc...) asparagine glycan.

This sequence belongs to the ABC transporter superfamily. ABCB family. Multidrug resistance exporter (TC 3.A.1.201) subfamily.

It is found in the membrane. The sequence is that of ABC transporter B family member 9 (ABCB9) from Arabidopsis thaliana (Mouse-ear cress).